The sequence spans 426 residues: MSKSENLYSAARELIPGGVNSPVRAFTGVGGTPLFIEKADGAYLYDVDGKAYIDYVGSWGPMVLGHNHPAIRNAVIEAAERGLSFGAPTEMEVKMAQLVTELVPTMDMVRMVNSGTEATMSAIRLARGFTGRDKIIKFEGCYHGHADCLLVKAGSGALTLGQPNSPGVPADFAKHTLTCTYNDLASVRAAFEQYPQEIACIIVEPVAGNMNCVPPLPEFLPGLRALCDEFGALLIIDEVMTGFRVALAGAQDYYGVEPDLTCLGKIIGGGMPVGAFGGRRDVMDALAPTGPVYQAGTLSGNPIAMAAGFACLNEVAQPGVHETLDELTTRLAEGLLEAAEEAGIPLVVNHVGGMFGIFFTDAESVTCYQDVMACDVERFKRFFHMMLDEGVYLAPSAFEAGFMSVAHSMEDINNTIDAARRVFAKL.

An N6-(pyridoxal phosphate)lysine modification is found at Lys265.

It belongs to the class-III pyridoxal-phosphate-dependent aminotransferase family. HemL subfamily. As to quaternary structure, homodimer. The cofactor is pyridoxal 5'-phosphate.

Its subcellular location is the cytoplasm. It catalyses the reaction (S)-4-amino-5-oxopentanoate = 5-aminolevulinate. It participates in porphyrin-containing compound metabolism; protoporphyrin-IX biosynthesis; 5-aminolevulinate from L-glutamyl-tRNA(Glu): step 2/2. This is Glutamate-1-semialdehyde 2,1-aminomutase from Escherichia coli O9:H4 (strain HS).